The primary structure comprises 380 residues: Cytochrome b (380 aa).

A run of 4 helical transmembrane segments spans residues phenylalanine 34–methionine 54, tryptophan 78–isoleucine 99, tryptophan 114–leucine 134, and phenylalanine 179–threonine 199. 2 residues coordinate heme b: histidine 84 and histidine 98. Residues histidine 183 and histidine 197 each contribute to the heme b site. Histidine 202 contacts a ubiquinone. The next 4 membrane-spanning stretches (helical) occupy residues serine 227–serine 247, leucine 289–histidine 309, leucine 321–serine 341, and phenylalanine 348–proline 368.

This sequence belongs to the cytochrome b family. In terms of assembly, the cytochrome bc1 complex contains 11 subunits: 3 respiratory subunits (MT-CYB, CYC1 and UQCRFS1), 2 core proteins (UQCRC1 and UQCRC2) and 6 low-molecular weight proteins (UQCRH/QCR6, UQCRB/QCR7, UQCRQ/QCR8, UQCR10/QCR9, UQCR11/QCR10 and a cleavage product of UQCRFS1). This cytochrome bc1 complex then forms a dimer. Heme b serves as cofactor.

The protein localises to the mitochondrion inner membrane. Its function is as follows. Component of the ubiquinol-cytochrome c reductase complex (complex III or cytochrome b-c1 complex) that is part of the mitochondrial respiratory chain. The b-c1 complex mediates electron transfer from ubiquinol to cytochrome c. Contributes to the generation of a proton gradient across the mitochondrial membrane that is then used for ATP synthesis. The sequence is that of Cytochrome b (MT-CYB) from Phalcoboenus australis (Striated caracara).